Here is a 108-residue protein sequence, read N- to C-terminus: Probable chaperone-like protein YdbL (108 aa).

The signal sequence occupies residues 1–21; it reads MKKTLLLCAFLVGLVSSNVMA.

It is found in the periplasm. Probably acts as a chaperone-like protein that contributes to, but is not required for, the formation of the YdbH-YnbE intermembrane bridge. Affects the function and the structure of the YdbH-YnbE complex. Overexpression of ydbL causes a negative effect on YdbH-YnbE function. The protein is Probable chaperone-like protein YdbL (ydbL) of Escherichia coli (strain K12).